The sequence spans 311 residues: Cell division protein ZipA (311 aa).

Residues 1–6 lie on the Periplasmic side of the membrane; the sequence is MENLQL. Residues 7–27 form a helical membrane-spanning segment; it reads VLFVLGAIAIIAVLVHGFWSI. The Cytoplasmic portion of the chain corresponds to 28-311; the sequence is RKQQPKSLKE…YLQRIRAQLD (284 aa). Positions 46 to 114 are disordered; it reads DQASVRDSQG…FALSDEPVQR (69 aa). Basic and acidic residues-rich tracts occupy residues 62–83 and 94–103; these read GEVRVRKEVPATDRQEKEDKPV and RDVEDSRHEQ.

The protein belongs to the ZipA family. As to quaternary structure, interacts with FtsZ via their C-terminal domains.

Its subcellular location is the cell inner membrane. In terms of biological role, essential cell division protein that stabilizes the FtsZ protofilaments by cross-linking them and that serves as a cytoplasmic membrane anchor for the Z ring. Also required for the recruitment to the septal ring of downstream cell division proteins. In Shewanella woodyi (strain ATCC 51908 / MS32), this protein is Cell division protein ZipA.